The sequence spans 222 residues: Thiamine-phosphate synthase (222 aa).

4-amino-2-methyl-5-(diphosphooxymethyl)pyrimidine contacts are provided by residues 40-44 and N81; that span reads QLRDK. The Mg(2+) site is built by D82 and D101. A 4-amino-2-methyl-5-(diphosphooxymethyl)pyrimidine-binding site is contributed by S120. Position 146-148 (146-148) interacts with 2-[(2R,5Z)-2-carboxy-4-methylthiazol-5(2H)-ylidene]ethyl phosphate; sequence TPT. K149 is a binding site for 4-amino-2-methyl-5-(diphosphooxymethyl)pyrimidine. G178 contributes to the 2-[(2R,5Z)-2-carboxy-4-methylthiazol-5(2H)-ylidene]ethyl phosphate binding site.

The protein belongs to the thiamine-phosphate synthase family. It depends on Mg(2+) as a cofactor.

It catalyses the reaction 2-[(2R,5Z)-2-carboxy-4-methylthiazol-5(2H)-ylidene]ethyl phosphate + 4-amino-2-methyl-5-(diphosphooxymethyl)pyrimidine + 2 H(+) = thiamine phosphate + CO2 + diphosphate. It carries out the reaction 2-(2-carboxy-4-methylthiazol-5-yl)ethyl phosphate + 4-amino-2-methyl-5-(diphosphooxymethyl)pyrimidine + 2 H(+) = thiamine phosphate + CO2 + diphosphate. The catalysed reaction is 4-methyl-5-(2-phosphooxyethyl)-thiazole + 4-amino-2-methyl-5-(diphosphooxymethyl)pyrimidine + H(+) = thiamine phosphate + diphosphate. The protein operates within cofactor biosynthesis; thiamine diphosphate biosynthesis; thiamine phosphate from 4-amino-2-methyl-5-diphosphomethylpyrimidine and 4-methyl-5-(2-phosphoethyl)-thiazole: step 1/1. In terms of biological role, condenses 4-methyl-5-(beta-hydroxyethyl)thiazole monophosphate (THZ-P) and 2-methyl-4-amino-5-hydroxymethyl pyrimidine pyrophosphate (HMP-PP) to form thiamine monophosphate (TMP). The chain is Thiamine-phosphate synthase from Mycobacterium tuberculosis (strain ATCC 25177 / H37Ra).